The sequence spans 154 residues: Xanthine-guanine phosphoribosyltransferase (154 aa).

5-phospho-alpha-D-ribose 1-diphosphate is bound by residues 37–38 (RG) and 90–98 (DDLVDTGNT). Aspartate 91 is a binding site for Mg(2+). Guanine-binding residues include aspartate 94 and isoleucine 137. Residues aspartate 94 and isoleucine 137 each contribute to the xanthine site. GMP-binding positions include 94–98 (DTGNT) and 136–137 (WI).

This sequence belongs to the purine/pyrimidine phosphoribosyltransferase family. XGPT subfamily. In terms of assembly, homotetramer. Requires Mg(2+) as cofactor.

The protein localises to the cell inner membrane. The catalysed reaction is GMP + diphosphate = guanine + 5-phospho-alpha-D-ribose 1-diphosphate. It catalyses the reaction XMP + diphosphate = xanthine + 5-phospho-alpha-D-ribose 1-diphosphate. The enzyme catalyses IMP + diphosphate = hypoxanthine + 5-phospho-alpha-D-ribose 1-diphosphate. It participates in purine metabolism; GMP biosynthesis via salvage pathway; GMP from guanine: step 1/1. The protein operates within purine metabolism; XMP biosynthesis via salvage pathway; XMP from xanthine: step 1/1. In terms of biological role, purine salvage pathway enzyme that catalyzes the transfer of the ribosyl-5-phosphate group from 5-phospho-alpha-D-ribose 1-diphosphate (PRPP) to the N9 position of the 6-oxopurines guanine and xanthine to form the corresponding ribonucleotides GMP (guanosine 5'-monophosphate) and XMP (xanthosine 5'-monophosphate), with the release of PPi. To a lesser extent, also acts on hypoxanthine. The sequence is that of Xanthine-guanine phosphoribosyltransferase from Histophilus somni (strain 129Pt) (Haemophilus somnus).